The following is a 279-amino-acid chain: Energy-coupling factor transporter ATP-binding protein EcfA1 (279 aa).

In terms of domain architecture, ABC transporter spans 5–240 (IELKKVTFNY…GDELLQLGLD (236 aa)). ATP is bound at residue 40–47 (GHNGSGKS).

It belongs to the ABC transporter superfamily. Energy-coupling factor EcfA family. Forms a stable energy-coupling factor (ECF) transporter complex composed of 2 membrane-embedded substrate-binding proteins (S component), 2 ATP-binding proteins (A component) and 2 transmembrane proteins (T component).

It localises to the cell membrane. Functionally, ATP-binding (A) component of a common energy-coupling factor (ECF) ABC-transporter complex. Unlike classic ABC transporters this ECF transporter provides the energy necessary to transport a number of different substrates. This is Energy-coupling factor transporter ATP-binding protein EcfA1 from Streptococcus pyogenes serotype M28 (strain MGAS6180).